The following is a 264-amino-acid chain: Small ribosomal subunit protein uS2 (264 aa).

Positions His-228–Ser-264 are disordered. Residues Glu-251–Ser-264 show a composition bias toward polar residues.

It belongs to the universal ribosomal protein uS2 family.

This Deinococcus radiodurans (strain ATCC 13939 / DSM 20539 / JCM 16871 / CCUG 27074 / LMG 4051 / NBRC 15346 / NCIMB 9279 / VKM B-1422 / R1) protein is Small ribosomal subunit protein uS2.